The sequence spans 168 residues: uncharacterized protein (168 aa).

Helical transmembrane passes span 15-33 (YLTV…LAVL), 41-57 (LSLT…ASSL), 73-93 (WIGL…GALL), 108-128 (VPLL…WVLN), and 129-149 (NLIA…VLAI).

It localises to the cell membrane. This is an uncharacterized protein from Haemophilus influenzae (strain ATCC 51907 / DSM 11121 / KW20 / Rd).